We begin with the raw amino-acid sequence, 185 residues long: Ribosome-recycling factor (185 aa).

This sequence belongs to the RRF family.

Its subcellular location is the cytoplasm. In terms of biological role, responsible for the release of ribosomes from messenger RNA at the termination of protein biosynthesis. May increase the efficiency of translation by recycling ribosomes from one round of translation to another. In Exiguobacterium sibiricum (strain DSM 17290 / CCUG 55495 / CIP 109462 / JCM 13490 / 255-15), this protein is Ribosome-recycling factor.